Consider the following 146-residue polypeptide: Small ribosomal subunit protein uS5 (146 aa).

An S5 DRBM domain is found at 8–71 (FQEAIVKIGR…DDAFKSLVTV (64 aa)).

It belongs to the universal ribosomal protein uS5 family. As to quaternary structure, part of the 30S ribosomal subunit. Contacts proteins S4 and S8.

Its function is as follows. With S4 and S12 plays an important role in translational accuracy. Located at the back of the 30S subunit body where it stabilizes the conformation of the head with respect to the body. The chain is Small ribosomal subunit protein uS5 from Aliarcobacter butzleri (strain RM4018) (Arcobacter butzleri).